We begin with the raw amino-acid sequence, 590 residues long: Probable lysosomal cobalamin transporter (590 aa).

The next 10 helical transmembrane spans lie at 8 to 28 (LIWV…SIFI), 46 to 66 (IFTL…VALV), 94 to 114 (AVAY…VVPF), 145 to 165 (TVAF…VPIG), 190 to 210 (ALTF…VLYT), 314 to 334 (LLSG…MLLT), 348 to 367 (CGYI…VFVH), 376 to 396 (YILF…GIAT), 421 to 441 (ITTV…SMVV), and 508 to 528 (FFGI…LLVF). A disordered region spans residues 567-590 (WEDITGRASRSPQVSGSAGRGTRE).

The protein belongs to the LIMR family. LMBRD1 subfamily.

It is found in the lysosome membrane. Functionally, probable lysosomal cobalamin transporter. Required to export cobalamin from lysosomes allowing its conversion to cofactors. The polypeptide is Probable lysosomal cobalamin transporter (Ajellomyces capsulatus (strain NAm1 / WU24) (Darling's disease fungus)).